The following is a 452-amino-acid chain: Keratin, type I cytoskeletal 42 (452 aa).

Positions 4–93 are head; the sequence is TTSVRQFSTS…GVSDALLGGS (90 aa). The tract at residues 94–129 is coil 1A; sequence EKETMQNLNDRLATYLDRVRALEEANADLEVKIREW. Positions 94 to 405 constitute an IF rod domain; the sequence is EKETMQNLND…RLLEGEDAHL (312 aa). A linker 1 region spans residues 130–147; that stretch reads YKKQGPGPARDYSPYFKT. The segment at 148-239 is coil 1B; that stretch reads IEDLRNKILA…KNHEEEMNAL (92 aa). Residues 240-262 form a linker 12 region; that stretch reads RGQVGGDVNVEMDAAPGVDLSRI. Residues 263–401 form a coil 2 region; that stretch reads LNEMRDQYEK…ATYRRLLEGE (139 aa). The interval 402 to 452 is tail; the sequence is DAHLATQYSSSLASQPSREGMVTSRQVRTIVEEVQDGKVVSSREQVHRSTH.

Belongs to the intermediate filament family. In terms of assembly, heterodimer of a type I and a type II keratin. Colocalizes with KRT8/KRT18 filament network. In terms of tissue distribution, expressed in nail matrix and nail bed epithelium (at protein level). Also expressed in tongue and digits with weak expression in vibrissae and in both filiform and fungiform papillae of oral mucosa.

It is found in the cytoplasm. The protein is Keratin, type I cytoskeletal 42 of Mus musculus (Mouse).